The chain runs to 407 residues: Probable beta-1,3-galactosyltransferase 4 (407 aa).

The helical; Signal-anchor for type II membrane protein transmembrane segment at 23 to 39 (WTLFLCIGFFCAGILFS) threads the bilayer.

This sequence belongs to the glycosyltransferase 31 family. Mn(2+) serves as cofactor.

It is found in the golgi apparatus membrane. The protein operates within protein modification; protein glycosylation. Functionally, beta-1,3-galactosyltransferase that transfers galactose from UDP-galactose to substrates with a terminal glycosyl residue. The protein is Probable beta-1,3-galactosyltransferase 4 (B3GALT4) of Arabidopsis thaliana (Mouse-ear cress).